The sequence spans 345 residues: Protein RecA (345 aa).

65 to 72 serves as a coordination point for ATP; the sequence is GPESSGKT.

This sequence belongs to the RecA family.

It is found in the cytoplasm. Its function is as follows. Can catalyze the hydrolysis of ATP in the presence of single-stranded DNA, the ATP-dependent uptake of single-stranded DNA by duplex DNA, and the ATP-dependent hybridization of homologous single-stranded DNAs. It interacts with LexA causing its activation and leading to its autocatalytic cleavage. This chain is Protein RecA, found in Colwellia psychrerythraea (strain 34H / ATCC BAA-681) (Vibrio psychroerythus).